The sequence spans 193 residues: Superoxide dismutase [Fe] (193 aa).

Fe cation contacts are provided by His-27, His-74, Asp-157, and His-161.

Belongs to the iron/manganese superoxide dismutase family. In terms of assembly, homodimer. Fe cation serves as cofactor.

It catalyses the reaction 2 superoxide + 2 H(+) = H2O2 + O2. Destroys superoxide anion radicals which are normally produced within the cells and which are toxic to biological systems. This Coxiella burnetii (strain RSA 493 / Nine Mile phase I) protein is Superoxide dismutase [Fe] (sodB).